The primary structure comprises 346 residues: MAGNRARIAVDAMGGDHAPNEIVAGAIRASEELDVDILLVGDRPSIEASLQHHHPSPNIEIVDAEGAIEMHEGISELRRKPKASINVSMDLVKKNRADAVVSAGHSGAAMGAATLRLGRLKGIDRPAIGTVFPTLLAGKSVIILDVGANVDCRPKYLEQFALMGTIYSQYVMGVEQPKVGLLNIGEESSKGNDLALATYQLLENNKTIPFIGNAEGRDVLSGRFDVIVCDGFVGNVLLKFAEAVGEIVLQIMREELPQGWRGILGTAILKPNLKKLKQRIDHAEHGGALLLGVAGVCIISHGSSYGPSIFNAIRLAKEAIDHQVLDRIKASQENPTPDSVQASVEK.

It belongs to the PlsX family. Homodimer. Probably interacts with PlsY.

The protein localises to the cytoplasm. The enzyme catalyses a fatty acyl-[ACP] + phosphate = an acyl phosphate + holo-[ACP]. The protein operates within lipid metabolism; phospholipid metabolism. Catalyzes the reversible formation of acyl-phosphate (acyl-PO(4)) from acyl-[acyl-carrier-protein] (acyl-ACP). This enzyme utilizes acyl-ACP as fatty acyl donor, but not acyl-CoA. The chain is Phosphate acyltransferase from Crocosphaera subtropica (strain ATCC 51142 / BH68) (Cyanothece sp. (strain ATCC 51142)).